Consider the following 96-residue polypeptide: Aspartyl/glutamyl-tRNA(Asn/Gln) amidotransferase subunit C (96 aa).

It belongs to the GatC family. Heterotrimer of A, B and C subunits.

It catalyses the reaction L-glutamyl-tRNA(Gln) + L-glutamine + ATP + H2O = L-glutaminyl-tRNA(Gln) + L-glutamate + ADP + phosphate + H(+). The catalysed reaction is L-aspartyl-tRNA(Asn) + L-glutamine + ATP + H2O = L-asparaginyl-tRNA(Asn) + L-glutamate + ADP + phosphate + 2 H(+). Its function is as follows. Allows the formation of correctly charged Asn-tRNA(Asn) or Gln-tRNA(Gln) through the transamidation of misacylated Asp-tRNA(Asn) or Glu-tRNA(Gln) in organisms which lack either or both of asparaginyl-tRNA or glutaminyl-tRNA synthetases. The reaction takes place in the presence of glutamine and ATP through an activated phospho-Asp-tRNA(Asn) or phospho-Glu-tRNA(Gln). This Deinococcus deserti (strain DSM 17065 / CIP 109153 / LMG 22923 / VCD115) protein is Aspartyl/glutamyl-tRNA(Asn/Gln) amidotransferase subunit C.